We begin with the raw amino-acid sequence, 440 residues long: MESQQLSQHSHISHGSACASVTSKEVHTNQDPLDVSASKTEECEKASTKANSQQTTTPASSAVPENPHHASPQTAQSHSPQNGPYPQQCMMTQNQANPSGWSFYGHPSMIPYTPYQMSPMYFPPGPQSQFPQYPSSVGTPLSTPSPESGNTFTDSSSADSDMTSTKKYVRPPPMLTSPNDFPNWVKTYIKFLQNSNLGGIIPTVNGKPVRQITDDELTFLYNTFQIFAPSQFLPTWVKDILSVDYTDIMKILSKSIEKMQSDTQEANDIVTLANLQYNGSTPADAFETKVTNIIDRLNNNGIHINNKVACQLIMRGLSGEYKFLRYTRHRHLNMTVAELFLDIHAIYEEQQGSRNSKPNYRRNLSDEKNDSRSYTNTTKPKVIARNPQKTNNSKSKTARAHNVSTSNNSPSTDNDSISKSTTEPIQLNNKHDLHLRPGTY.

The span at 1-16 (MESQQLSQHSHISHGS) shows a compositional bias: low complexity. 3 disordered regions span residues 1–93 (MESQ…MMTQ), 126–173 (PQSQ…RPPP), and 352–440 (GSRN…PGTY). Composition is skewed to polar residues over residues 48–60 (TKAN…TPAS), 71–93 (SPQT…MMTQ), and 127–152 (QSQF…GNTF). Residues 153-165 (TDSSSADSDMTST) are compositionally biased toward low complexity. Residues 299-401 (NNGIHINNKV…NSKSKTARAH (103 aa)) form an RNA-binding region. Residues 402 to 418 (NVSTSNNSPSTDNDSIS) show a composition bias toward low complexity. S416 is modified (phosphoserine). The span at 419 to 428 (KSTTEPIQLN) shows a compositional bias: polar residues. Residues 429-440 (NKHDLHLRPGTY) are compositionally biased toward basic and acidic residues.

Homotrimer.

Its subcellular location is the cytoplasm. In terms of biological role, capsid protein (CA) is the structural component of the virus-like particle (VLP), forming the shell that encapsulates the retrotransposons dimeric RNA genome. The particles are assembled from trimer-clustered units and there are holes in the capsid shells that allow for the diffusion of macromolecules. CA also has nucleocapsid-like chaperone activity, promoting primer tRNA(i)-Met annealing to the multipartite primer-binding site (PBS), dimerization of Ty1 RNA and initiation of reverse transcription. The protein is Transposon Ty1-GR1 Gag polyprotein (TY1A-GR1) of Saccharomyces cerevisiae (strain ATCC 204508 / S288c) (Baker's yeast).